The sequence spans 106 residues: uncharacterized protein (106 aa).

This is an uncharacterized protein from Saccharomyces cerevisiae (strain ATCC 204508 / S288c) (Baker's yeast).